The sequence spans 235 residues: Segregation and condensation protein A (235 aa).

This sequence belongs to the ScpA family. As to quaternary structure, component of a cohesin-like complex composed of ScpA, ScpB and the Smc homodimer, in which ScpA and ScpB bind to the head domain of Smc. The presence of the three proteins is required for the association of the complex with DNA.

It localises to the cytoplasm. Functionally, participates in chromosomal partition during cell division. May act via the formation of a condensin-like complex containing Smc and ScpB that pull DNA away from mid-cell into both cell halves. In Streptococcus uberis (strain ATCC BAA-854 / 0140J), this protein is Segregation and condensation protein A.